A 198-amino-acid chain; its full sequence is Glycerol-3-phosphate acyltransferase (198 aa).

Helical transmembrane passes span 5 to 25 (LILL…LWIG), 56 to 76 (SIVT…PFFF), 84 to 104 (FWLL…FAGF), 114 to 134 (AGVI…VFLV), and 158 to 178 (LFMG…FVIW).

The protein belongs to the PlsY family. Probably interacts with PlsX.

The protein localises to the cell membrane. The enzyme catalyses an acyl phosphate + sn-glycerol 3-phosphate = a 1-acyl-sn-glycero-3-phosphate + phosphate. It functions in the pathway lipid metabolism; phospholipid metabolism. In terms of biological role, catalyzes the transfer of an acyl group from acyl-phosphate (acyl-PO(4)) to glycerol-3-phosphate (G3P) to form lysophosphatidic acid (LPA). This enzyme utilizes acyl-phosphate as fatty acyl donor, but not acyl-CoA or acyl-ACP. In Listeria monocytogenes serovar 1/2a (strain ATCC BAA-679 / EGD-e), this protein is Glycerol-3-phosphate acyltransferase.